A 450-amino-acid polypeptide reads, in one-letter code: MSTHVTFDYSKALSFIGEHEITYLRDAVKVTHHAIHEKTGAGNDFLGWVDLPLQYDKEEFARIQKCAEKIKNDSDILLVVGIGGSYLGARAAIEMLNHSFYNTLSKEQRKTPQVLFVGQNISSTYMKDLMDVLEGKDFSINVISKSGTTTEPALAFRIFRKLLEEKYGKEEARKRIYATTDKARGALKTLADNEGYETFVIPDDVGGRFSVLTPVGLLPIAVSGLNIEEMMKGAAAGHDDFGTSELEENPAYQYAVVRNALYNKGKTIEMLVNYEPALQYFAEWWKQLFGESEGKDQKGIFPSSANFSTDLHSLGQYVQEGRRDLFETVLKVGKPTHELTIESEENDLDGLNYLAGETVDFVNTKAYEGTLLAHSDGGVPNLIVNIPELNEYTFGYLVYFFEKACAMSGYLLGVNPFDQPGVEAYKKNMFALLGKPGFEELKAELEERLK.

The residue at position 39 (threonine 39) is a Phosphothreonine. Residue glutamate 291 is the Proton donor of the active site. Residues histidine 312 and lysine 426 contribute to the active site.

This sequence belongs to the GPI family.

Its subcellular location is the cytoplasm. The enzyme catalyses alpha-D-glucose 6-phosphate = beta-D-fructose 6-phosphate. The protein operates within carbohydrate biosynthesis; gluconeogenesis. Its pathway is carbohydrate degradation; glycolysis; D-glyceraldehyde 3-phosphate and glycerone phosphate from D-glucose: step 2/4. Functionally, catalyzes the reversible isomerization of glucose-6-phosphate to fructose-6-phosphate. This Bacillus cereus (strain ATCC 10987 / NRS 248) protein is Glucose-6-phosphate isomerase.